The following is a 384-amino-acid chain: Methylthioribose-1-phosphate isomerase (384 aa).

D255 functions as the Proton donor in the catalytic mechanism.

The protein belongs to the eIF-2B alpha/beta/delta subunits family. MtnA subfamily.

It localises to the cytoplasm. It is found in the nucleus. The enzyme catalyses 5-(methylsulfanyl)-alpha-D-ribose 1-phosphate = 5-(methylsulfanyl)-D-ribulose 1-phosphate. Its pathway is amino-acid biosynthesis; L-methionine biosynthesis via salvage pathway; L-methionine from S-methyl-5-thio-alpha-D-ribose 1-phosphate: step 1/6. Functionally, catalyzes the interconversion of methylthioribose-1-phosphate (MTR-1-P) into methylthioribulose-1-phosphate (MTRu-1-P). This is Methylthioribose-1-phosphate isomerase (mri1) from Talaromyces marneffei (strain ATCC 18224 / CBS 334.59 / QM 7333) (Penicillium marneffei).